Reading from the N-terminus, the 264-residue chain is Methionine aminopeptidase (264 aa).

A substrate-binding site is contributed by histidine 79. A divalent metal cation is bound by residues aspartate 97, aspartate 108, and histidine 171. A substrate-binding site is contributed by histidine 178. 2 residues coordinate a divalent metal cation: glutamate 204 and glutamate 235.

Belongs to the peptidase M24A family. Methionine aminopeptidase type 1 subfamily. As to quaternary structure, monomer. Co(2+) is required as a cofactor. Requires Zn(2+) as cofactor. Mn(2+) serves as cofactor. The cofactor is Fe(2+).

It carries out the reaction Release of N-terminal amino acids, preferentially methionine, from peptides and arylamides.. In terms of biological role, removes the N-terminal methionine from nascent proteins. The N-terminal methionine is often cleaved when the second residue in the primary sequence is small and uncharged (Met-Ala-, Cys, Gly, Pro, Ser, Thr, or Val). Requires deformylation of the N(alpha)-formylated initiator methionine before it can be hydrolyzed. The sequence is that of Methionine aminopeptidase from Buchnera aphidicola subsp. Acyrthosiphon pisum (strain APS) (Acyrthosiphon pisum symbiotic bacterium).